A 339-amino-acid chain; its full sequence is tRNA N6-adenosine threonylcarbamoyltransferase (339 aa).

Fe cation-binding residues include His111 and His115. Substrate is bound by residues 139-143 (LVSGG), Asp172, Gly185, Asp189, and Asn280. Asp308 contributes to the Fe cation binding site.

It belongs to the KAE1 / TsaD family. It depends on Fe(2+) as a cofactor.

The protein localises to the cytoplasm. The catalysed reaction is L-threonylcarbamoyladenylate + adenosine(37) in tRNA = N(6)-L-threonylcarbamoyladenosine(37) in tRNA + AMP + H(+). Its function is as follows. Required for the formation of a threonylcarbamoyl group on adenosine at position 37 (t(6)A37) in tRNAs that read codons beginning with adenine. Is involved in the transfer of the threonylcarbamoyl moiety of threonylcarbamoyl-AMP (TC-AMP) to the N6 group of A37, together with TsaE and TsaB. TsaD likely plays a direct catalytic role in this reaction. This is tRNA N6-adenosine threonylcarbamoyltransferase from Bacteroides thetaiotaomicron (strain ATCC 29148 / DSM 2079 / JCM 5827 / CCUG 10774 / NCTC 10582 / VPI-5482 / E50).